Here is a 741-residue protein sequence, read N- to C-terminus: Methionine--tRNA ligase (741 aa).

Residues 11–21 (PYANGPIHAGH) carry the 'HIGH' region motif. The Zn(2+) site is built by cysteine 143, cysteine 146, cysteine 156, and cysteine 159. A 'KMSKS' region motif is present at residues 345–349 (KFSTS). Position 348 (threonine 348) interacts with ATP. Residues 641–741 (EFAKLDLRVG…KEVKLGARIR (101 aa)) form the tRNA-binding domain.

It belongs to the class-I aminoacyl-tRNA synthetase family. MetG type 1 subfamily. Homodimer. It depends on Zn(2+) as a cofactor.

The protein localises to the cytoplasm. The enzyme catalyses tRNA(Met) + L-methionine + ATP = L-methionyl-tRNA(Met) + AMP + diphosphate. In terms of biological role, is required not only for elongation of protein synthesis but also for the initiation of all mRNA translation through initiator tRNA(fMet) aminoacylation. The chain is Methionine--tRNA ligase from Thermococcus kodakarensis (strain ATCC BAA-918 / JCM 12380 / KOD1) (Pyrococcus kodakaraensis (strain KOD1)).